Consider the following 181-residue polypeptide: Ribosome-recycling factor (181 aa).

The disordered stretch occupies residues 135–160; sequence MDDIKKDKDMPEDDARKAEDQTQKLT.

This sequence belongs to the RRF family.

Its subcellular location is the cytoplasm. In terms of biological role, responsible for the release of ribosomes from messenger RNA at the termination of protein biosynthesis. May increase the efficiency of translation by recycling ribosomes from one round of translation to another. This is Ribosome-recycling factor from Leuconostoc mesenteroides subsp. mesenteroides (strain ATCC 8293 / DSM 20343 / BCRC 11652 / CCM 1803 / JCM 6124 / NCDO 523 / NBRC 100496 / NCIMB 8023 / NCTC 12954 / NRRL B-1118 / 37Y).